The sequence spans 430 residues: Keratin, type I cytoskeletal 18 (430 aa).

Residue Ser-2 is modified to N-acetylserine. The interval 2–79 (SFTTRSTFST…GLAGMGGIQN (78 aa)) is head. Phosphoserine is present on residues Ser-7, Ser-10, Ser-15, and Ser-18. Ser-30 and Ser-31 each carry phosphoserine; alternate. Residues Ser-30 and Ser-31 are each glycosylated (O-linked (GlcNAc) serine; alternate). Position 34 is a phosphoserine; by CDK1 (Ser-34). Tyr-36 is modified (phosphotyrosine). Phosphoserine is present on Ser-42. Arg-45 is modified (omega-N-methylarginine). Ser-49 carries the post-translational modification Phosphoserine; alternate. Ser-49 is a glycosylation site (O-linked (GlcNAc) serine; alternate). The residue at position 51 (Ser-51) is a Phosphoserine; by MAPKAPK2 and MAPKAPK3. Position 52 is a phosphothreonine (Thr-52). Ser-53 carries the post-translational modification Phosphoserine; by CAMK, PKC/PRKCE and AURKA. At Arg-55 the chain carries Omega-N-methylarginine. Ser-60 carries the post-translational modification Phosphoserine. Residue Thr-65 is modified to Phosphothreonine. Residues 70-373 (GLAGMGGIQN…EALLNIKVKL (304 aa)) are necessary for interaction with PNN. The segment at 77–128 (IQNEKETMQSLNDRLASYLDRVRSLETENRRLESKIREHLEKKGPQVRDWSH) is interaction with TRADD. Residues 80-115 (EKETMQSLNDRLASYLDRVRSLETENRRLESKIREH) are coil 1A. The IF rod domain occupies 80–391 (EKETMQSLND…RLLEDGEDFN (312 aa)). Lys-81 participates in a covalent cross-link: Glycyl lysine isopeptide (Lys-Gly) (interchain with G-Cter in SUMO2). Ser-93 and Ser-100 each carry phosphoserine. The tract at residues 116–132 (LEKKGPQVRDWSHYFKI) is linker 1. Lys-131 is modified (N6-acetyllysine). Residues 133 to 224 (IEDLRAQIFA…KNHEEEVKGL (92 aa)) form a coil 1B region. The residue at position 177 (Ser-177) is a Phosphoserine. Positions 225–248 (QAQIASSGLTVEVDAPKSQDLAKI) are linker 12. Residues 243–391 (QDLAKIMADI…RLLEDGEDFN (149 aa)) form an interaction with DNAJB6 region. Residue Lys-247 forms a Glycyl lysine isopeptide (Lys-Gly) (interchain with G-Cter in SUMO2) linkage. Residues 249–387 (MADIRAQYDE…ATYRRLLEDG (139 aa)) form a coil 2 region. Thr-302 is modified (phosphothreonine). Residues Ser-305, Ser-319, and Ser-323 each carry the phosphoserine modification. Glycyl lysine isopeptide (Lys-Gly) (interchain with G-Cter in SUMO2) cross-links involve residues Lys-370 and Lys-372. Residues 388–430 (EDFNLGDALDSSNSMQTIQKTTTRRIVDGKVVSETNDTKVLRH) are tail. Residues Ser-398, Ser-399, and Ser-401 each carry the phosphoserine modification. The residue at position 404 (Thr-404) is a Phosphothreonine. Lys-417 participates in a covalent cross-link: Glycyl lysine isopeptide (Lys-Gly) (interchain with G-Cter in SUMO2). Lys-426 carries the N6-acetyllysine; alternate modification. A Glycyl lysine isopeptide (Lys-Gly) (interchain with G-Cter in SUMO1); alternate cross-link involves residue Lys-426. A Glycyl lysine isopeptide (Lys-Gly) (interchain with G-Cter in SUMO2); alternate cross-link involves residue Lys-426.

Belongs to the intermediate filament family. In terms of assembly, heterotetramer of two type I and two type II keratins. KRT18 associates with KRT8. Interacts with PLEC isoform 1C, when in a heterodimer with KRT8. Interacts with the thrombin-antithrombin complex. Interacts with PNN and mutated CFTR. Interacts with YWHAE, YWHAH and YWHAZ only when phosphorylated. Interacts with DNAJB6, TCHP and TRADD. Interacts with FAM83H. Interacts with EPPK1. Interacts with PKP1 and PKP2. As to quaternary structure, (Microbial infection) Interacts with hepatitis C virus/HCV core protein. In terms of processing, phosphorylation at Ser-34 increases during mitosis. Hyperphosphorylated at Ser-53 in diseased cirrhosis liver. Phosphorylation increases by IL-6. Post-translationally, proteolytically cleaved by caspases during epithelial cell apoptosis. Cleavage occurs at Asp-238 by either caspase-3, caspase-6 or caspase-7. O-GlcNAcylation increases solubility, and decreases stability by inducing proteasomal degradation. Expressed in colon, placenta, liver and very weakly in exocervix. Increased expression observed in lymph nodes of breast carcinoma.

The protein localises to the nucleus matrix. It is found in the cytoplasm. It localises to the perinuclear region. The protein resides in the nucleus. Its subcellular location is the nucleolus. In terms of biological role, involved in the uptake of thrombin-antithrombin complexes by hepatic cells. When phosphorylated, plays a role in filament reorganization. Involved in the delivery of mutated CFTR to the plasma membrane. Together with KRT8, is involved in interleukin-6 (IL-6)-mediated barrier protection. The chain is Keratin, type I cytoskeletal 18 (KRT18) from Homo sapiens (Human).